Reading from the N-terminus, the 333-residue chain is MVREKIRVSTRTLQWKCVESRIDSKRLYYGRFILSPLMKGQADTIGIAMRRVLLGEIEGTCITRVKSEKIPHEYSTIIGIEESVHEILMNLKEIVLRSNLYGTRDASICFKGPGYVTAQDIILPPSVEIVDNTQHIANVTEPVNLCIELKIERNRGYRIKTLKNFQDGSYPIDATFMPVRNVNHSIHSYVNGNEKQEILFLEIWTNGSLTPKEALYEASRNLIDLFIPFLHAEEDNFNLENNQHKVTLPLFTFHDILAKEKLRKKKKEIALKSIFIDQLELPPRIYNCLKRSNIHTLLELLNNSQEDLLKIEHFRVEDVKYILDFLEIEKHFA.

The interval 1–233 (MVREKIRVST…DLFIPFLHAE (233 aa)) is alpha N-terminal domain (alpha-NTD). The tract at residues 267–333 (KEIALKSIFI…DFLEIEKHFA (67 aa)) is alpha C-terminal domain (alpha-CTD).

The protein belongs to the RNA polymerase alpha chain family. In plastids the minimal PEP RNA polymerase catalytic core is composed of four subunits: alpha, beta, beta', and beta''. When a (nuclear-encoded) sigma factor is associated with the core the holoenzyme is formed, which can initiate transcription.

Its subcellular location is the plastid. The protein resides in the chloroplast. The catalysed reaction is RNA(n) + a ribonucleoside 5'-triphosphate = RNA(n+1) + diphosphate. In terms of biological role, DNA-dependent RNA polymerase catalyzes the transcription of DNA into RNA using the four ribonucleoside triphosphates as substrates. The protein is DNA-directed RNA polymerase subunit alpha of Glycine max (Soybean).